Reading from the N-terminus, the 485-residue chain is NADH-quinone oxidoreductase subunit N (485 aa).

14 consecutive transmembrane segments (helical) span residues 8–28, 35–55, 71–91, 105–125, 127–147, 159–179, 203–223, 235–255, 271–291, 297–317, 326–346, 373–393, 408–430, and 455–475; these read LIAL…MLSI, FLNA…LWFV, GFAM…CTFA, FYLL…ANHL, SLFL…GYAF, YTIL…LVYA, LLAG…LVPF, PAPV…GVVM, VVLA…ALSQ, LLGY…IALQ, VGVY…VVSL, AAVM…LGFI, WWLV…RVAV, and IVVL…QPLI.

This sequence belongs to the complex I subunit 2 family. In terms of assembly, NDH-1 is composed of 13 different subunits. Subunits NuoA, H, J, K, L, M, N constitute the membrane sector of the complex.

The protein resides in the cell inner membrane. The enzyme catalyses a quinone + NADH + 5 H(+)(in) = a quinol + NAD(+) + 4 H(+)(out). Functionally, NDH-1 shuttles electrons from NADH, via FMN and iron-sulfur (Fe-S) centers, to quinones in the respiratory chain. The immediate electron acceptor for the enzyme in this species is believed to be ubiquinone. Couples the redox reaction to proton translocation (for every two electrons transferred, four hydrogen ions are translocated across the cytoplasmic membrane), and thus conserves the redox energy in a proton gradient. This is NADH-quinone oxidoreductase subunit N from Escherichia coli (strain ATCC 8739 / DSM 1576 / NBRC 3972 / NCIMB 8545 / WDCM 00012 / Crooks).